We begin with the raw amino-acid sequence, 596 residues long: Elongation factor 4 (596 aa).

Residues 2-184 (KNIRNFSIIA…TIVKNIPSPA (183 aa)) enclose the tr-type G domain. Residues 14–19 (DHGKST) and 131–134 (NKID) each bind GTP.

The protein belongs to the TRAFAC class translation factor GTPase superfamily. Classic translation factor GTPase family. LepA subfamily.

It is found in the cell inner membrane. It carries out the reaction GTP + H2O = GDP + phosphate + H(+). In terms of biological role, required for accurate and efficient protein synthesis under certain stress conditions. May act as a fidelity factor of the translation reaction, by catalyzing a one-codon backward translocation of tRNAs on improperly translocated ribosomes. Back-translocation proceeds from a post-translocation (POST) complex to a pre-translocation (PRE) complex, thus giving elongation factor G a second chance to translocate the tRNAs correctly. Binds to ribosomes in a GTP-dependent manner. The chain is Elongation factor 4 from Colwellia psychrerythraea (strain 34H / ATCC BAA-681) (Vibrio psychroerythus).